The chain runs to 711 residues: MAFSHDNRVRFKDEGKPLSSEYGYGRKARPSLDRVFKNVKWGFKKPLSFPSHKDPDHKETSSVTRKNIINPQDSFLQNWNKIFLFACVVALAIDPLFFYIPIVDSARHCLTLDSKLEIAASLLRTLIDAFYIIHIVFQFRTAYIAPSSRVFGRGELVDDAKAIALKYLSSYFIIDLLSILPLPQIVVLAVIPSVNQPVSLLTKDYLKFSIIAQYVPRILRMYPLYTEVTRTSGIVTETAWAGAAWNLSLYMLASHVFGALWYLISVEREDRCWQEACEKTKGCNMKFLYCENDRNVSNNFLTTSCPFLDPGDITNSTIFNFGIFTDALKSGVVESHDFWKKFFYCFWWGLRNLSALGQNLQTSKFVGEIIFAISICISGLVLFALLIGNMQKYLESTTVREEEMRVRKRDAEQWMSHRMLPEDLRKRIRRYEQYRWQETRGVEEETLLRNLPKDLRRDIKRHLCLDLLKKVPLFEIMDEQLLDAVCDRLRPVLYTENSYVIREGDPVGEMLFVMRGRLVSATTNGGRSGFFNAVNLKASDFCGEDLLPWALDPQSSSHFPISTRTVQALTEVEAFALTAEDLKSVASQFRRLHSKQLQHTFRFYSVQWRTWSVSFIQAAWRRYCRRKLAKSLRDEEDRLREALASQDKEHNAATVSSSLSLGGALYASRFASNALHNLRHNISNLPPRYTLPLLPQKPTEPDFTANHTTDP.

Residues 1–81 lie on the Cytoplasmic side of the membrane; that stretch reads MAFSHDNRVR…QDSFLQNWNK (81 aa). A helical transmembrane segment spans residues 82 to 102; that stretch reads IFLFACVVALAIDPLFFYIPI. The Extracellular portion of the chain corresponds to 103 to 116; the sequence is VDSARHCLTLDSKL. Residues 117 to 137 form a helical membrane-spanning segment; it reads EIAASLLRTLIDAFYIIHIVF. Residues 138–170 are Cytoplasmic-facing; sequence QFRTAYIAPSSRVFGRGELVDDAKAIALKYLSS. Residues 171–191 form a helical membrane-spanning segment; it reads YFIIDLLSILPLPQIVVLAVI. Residues 192 to 204 lie on the Extracellular side of the membrane; sequence PSVNQPVSLLTKD. The helical transmembrane segment at 205-225 threads the bilayer; sequence YLKFSIIAQYVPRILRMYPLY. Residues 226 to 243 lie on the Cytoplasmic side of the membrane; it reads TEVTRTSGIVTETAWAGA. Residues 244–264 form a helical membrane-spanning segment; that stretch reads AWNLSLYMLASHVFGALWYLI. Residues 265-366 lie on the Extracellular side of the membrane; the sequence is SVEREDRCWQ…GQNLQTSKFV (102 aa). A helical transmembrane segment spans residues 367–387; that stretch reads GEIIFAISICISGLVLFALLI. Topologically, residues 388–711 are cytoplasmic; it reads GNMQKYLEST…DFTANHTTDP (324 aa). A nucleoside 3',5'-cyclic phosphate-binding positions include 473-603 and Glu544; that span reads LFEI…TFRF. The tract at residues 589–604 is calmodulin-binding; it reads FRRLHSKQLQHTFRFY. In terms of domain architecture, IQ spans 609–638; the sequence is RTWSVSFIQAAWRRYCRRKLAKSLRDEEDR. Residues 689 to 711 form a disordered region; the sequence is YTLPLLPQKPTEPDFTANHTTDP.

Belongs to the cyclic nucleotide-gated cation channel (TC 1.A.1.5) family. In terms of assembly, homotetramer or heterotetramer.

The protein localises to the cell membrane. In terms of biological role, probable cyclic nucleotide-gated ion channel. This Arabidopsis thaliana (Mouse-ear cress) protein is Probable cyclic nucleotide-gated ion channel 10 (CNGC10).